The following is a 62-amino-acid chain: Large ribosomal subunit protein bL28 (62 aa).

The disordered stretch occupies residues 1–27 (MARKCVVTGRQTRSGNQRSHAMNSNKR). Residues 9–26 (GRQTRSGNQRSHAMNSNK) show a composition bias toward polar residues.

The protein belongs to the bacterial ribosomal protein bL28 family.

This is Large ribosomal subunit protein bL28 from Oceanobacillus iheyensis (strain DSM 14371 / CIP 107618 / JCM 11309 / KCTC 3954 / HTE831).